Reading from the N-terminus, the 342-residue chain is Replication factor C subunit 3 (342 aa).

ATP is bound at residue 63–70 (GPPGTGKT).

This sequence belongs to the activator 1 small subunits family. Heteropentamer of subunits rfc1, rfc2, rfc3, rfc4 and rfc5 that forms a complex (RFC) with PCNA in the presence of ATP. Two other complexes exist where rfc1 can be replaced by either ctf18 or elg1 to form the ctf18-RFC or the elg1-RFC complexes respectively.

It localises to the nucleus. Its function is as follows. The elongation of primed DNA templates by DNA polymerase delta and epsilon requires the action of the accessory proteins PCNA and activator 1. Subunit 3 binds ATP. Also involved in replication and DNA damage checkpoint controls, probably functioning as a checkpoint sensor. This chain is Replication factor C subunit 3 (rfc3), found in Schizosaccharomyces pombe (strain 972 / ATCC 24843) (Fission yeast).